Reading from the N-terminus, the 126-residue chain is S-adenosylmethionine decarboxylase proenzyme (126 aa).

S63 functions as the Schiff-base intermediate with substrate; via pyruvic acid in the catalytic mechanism. Pyruvic acid (Ser); by autocatalysis is present on S63. The Proton acceptor; for processing activity role is filled by H68. Residue C83 is the Proton donor; for catalytic activity of the active site.

Belongs to the prokaryotic AdoMetDC family. Type 1 subfamily. As to quaternary structure, heterotetramer of two alpha and two beta chains arranged as a dimer of alpha/beta heterodimers. The cofactor is pyruvate. In terms of processing, is synthesized initially as an inactive proenzyme. Formation of the active enzyme involves a self-maturation process in which the active site pyruvoyl group is generated from an internal serine residue via an autocatalytic post-translational modification. Two non-identical subunits are generated from the proenzyme in this reaction, and the pyruvate is formed at the N-terminus of the alpha chain, which is derived from the carboxyl end of the proenzyme. The post-translation cleavage follows an unusual pathway, termed non-hydrolytic serinolysis, in which the side chain hydroxyl group of the serine supplies its oxygen atom to form the C-terminus of the beta chain, while the remainder of the serine residue undergoes an oxidative deamination to produce ammonia and the pyruvoyl group blocking the N-terminus of the alpha chain.

It carries out the reaction S-adenosyl-L-methionine + H(+) = S-adenosyl 3-(methylsulfanyl)propylamine + CO2. Its pathway is amine and polyamine biosynthesis; S-adenosylmethioninamine biosynthesis; S-adenosylmethioninamine from S-adenosyl-L-methionine: step 1/1. In terms of biological role, catalyzes the decarboxylation of S-adenosylmethionine to S-adenosylmethioninamine (dcAdoMet), the propylamine donor required for the synthesis of the polyamines spermine and spermidine from the diamine putrescine. The polypeptide is S-adenosylmethionine decarboxylase proenzyme (Clostridium tetani (strain Massachusetts / E88)).